Reading from the N-terminus, the 409-residue chain is Phosphopentomutase (409 aa).

Positions 10, 308, 313, 349, 350, and 361 each coordinate Mn(2+).

Belongs to the phosphopentomutase family. It depends on Mn(2+) as a cofactor.

The protein localises to the cytoplasm. It catalyses the reaction 2-deoxy-alpha-D-ribose 1-phosphate = 2-deoxy-D-ribose 5-phosphate. The enzyme catalyses alpha-D-ribose 1-phosphate = D-ribose 5-phosphate. The protein operates within carbohydrate degradation; 2-deoxy-D-ribose 1-phosphate degradation; D-glyceraldehyde 3-phosphate and acetaldehyde from 2-deoxy-alpha-D-ribose 1-phosphate: step 1/2. In terms of biological role, isomerase that catalyzes the conversion of deoxy-ribose 1-phosphate (dRib-1-P) and ribose 1-phosphate (Rib-1-P) to deoxy-ribose 5-phosphate (dRib-5-P) and ribose 5-phosphate (Rib-5-P), respectively. In Buchnera aphidicola subsp. Schizaphis graminum (strain Sg), this protein is Phosphopentomutase.